Here is a 656-residue protein sequence, read N- to C-terminus: DNA topoisomerase 3 (656 aa).

Residues 2–156 (KVLCVAEKNS…QVYRAVFSHL (155 aa)) enclose the Toprim domain. In terms of domain architecture, Topo IA-type catalytic spans 172–635 (DMKSVHAVGT…DIVEKYRKYW (464 aa)). The O-(5'-phospho-DNA)-tyrosine intermediate role is filled by tyrosine 356.

This sequence belongs to the type IA topoisomerase family. Forms a complex with SGS1 and RMI1. Interacts with SGS1.

The enzyme catalyses ATP-independent breakage of single-stranded DNA, followed by passage and rejoining.. Releases the supercoiling and torsional tension of DNA introduced during the DNA replication and transcription by transiently cleaving and rejoining one strand of the DNA duplex. Introduces a single-strand break via transesterification at a target site in duplex DNA. The scissile phosphodiester is attacked by the catalytic tyrosine of the enzyme, resulting in the formation of a DNA-(5'-phosphotyrosyl)-enzyme intermediate and the expulsion of a 3'-OH DNA strand. The free DNA strand than undergoes passage around the unbroken strand thus removing DNA supercoils. Finally, in the religation step, the DNA 3'-OH attacks the covalent intermediate to expel the active-site tyrosine and restore the DNA phosphodiester backbone. Essential for proper chromosome segregation in both meiosis and mitosis. Weakly relaxes negative supercoils and displays a distinct preference for binding single-stranded DNA. The TOP3-SGS1 protein complex may function as a eukaryotic reverse gyrase introducing positive supercoils into extrachromosomal ribosomal DNA rings. This is DNA topoisomerase 3 (TOP3) from Saccharomyces cerevisiae (strain ATCC 204508 / S288c) (Baker's yeast).